Reading from the N-terminus, the 165-residue chain is 3-isopropylmalate dehydratase small subunit (165 aa).

It belongs to the LeuD family. LeuD type 2 subfamily. In terms of assembly, heterodimer of LeuC and LeuD.

It carries out the reaction (2R,3S)-3-isopropylmalate = (2S)-2-isopropylmalate. It participates in amino-acid biosynthesis; L-leucine biosynthesis; L-leucine from 3-methyl-2-oxobutanoate: step 2/4. Functionally, catalyzes the isomerization between 2-isopropylmalate and 3-isopropylmalate, via the formation of 2-isopropylmaleate. This chain is 3-isopropylmalate dehydratase small subunit, found in Saccharolobus islandicus (strain Y.N.15.51 / Yellowstone #2) (Sulfolobus islandicus).